The following is a 463-amino-acid chain: Asparagine--tRNA ligase (463 aa).

It belongs to the class-II aminoacyl-tRNA synthetase family. Homodimer.

It localises to the cytoplasm. It catalyses the reaction tRNA(Asn) + L-asparagine + ATP = L-asparaginyl-tRNA(Asn) + AMP + diphosphate + H(+). The chain is Asparagine--tRNA ligase from Acholeplasma laidlawii (strain PG-8A).